Here is a 209-residue protein sequence, read N- to C-terminus: PRA1 family protein E (209 aa).

The disordered stretch occupies residues 1–20 (MNQKPPPYGYGGAGGGGVGP). Gly residues predominate over residues 9-19 (GYGGAGGGGVG). Helical transmembrane passes span 90-110 (IVFL…VVFI), 132-152 (VDDK…LVYT), and 155-175 (GENV…HGAF).

The protein belongs to the PRA1 family. As to quaternary structure, interacts with PRA1B1, PRA1B2, PRA1B3, PRA1B4, PRA1B5 and PRA1B6. Expressed in hypocotyls, roots, lateral roots, columella cells, leaves and shoot apex.

The protein resides in the endosome membrane. Its function is as follows. May be involved in both secretory and endocytic intracellular trafficking in the endosomal/prevacuolar compartments. In Arabidopsis thaliana (Mouse-ear cress), this protein is PRA1 family protein E (PRA1E).